A 279-amino-acid chain; its full sequence is Acyl-[acyl-carrier-protein]--UDP-N-acetylglucosamine O-acyltransferase (279 aa).

Belongs to the transferase hexapeptide repeat family. LpxA subfamily. In terms of assembly, homotrimer.

The protein resides in the cytoplasm. It catalyses the reaction a (3R)-hydroxyacyl-[ACP] + UDP-N-acetyl-alpha-D-glucosamine = a UDP-3-O-[(3R)-3-hydroxyacyl]-N-acetyl-alpha-D-glucosamine + holo-[ACP]. It participates in glycolipid biosynthesis; lipid IV(A) biosynthesis; lipid IV(A) from (3R)-3-hydroxytetradecanoyl-[acyl-carrier-protein] and UDP-N-acetyl-alpha-D-glucosamine: step 1/6. Involved in the biosynthesis of lipid A, a phosphorylated glycolipid that anchors the lipopolysaccharide to the outer membrane of the cell. In Mesorhizobium japonicum (strain LMG 29417 / CECT 9101 / MAFF 303099) (Mesorhizobium loti (strain MAFF 303099)), this protein is Acyl-[acyl-carrier-protein]--UDP-N-acetylglucosamine O-acyltransferase.